Here is a 603-residue protein sequence, read N- to C-terminus: DNA mismatch repair protein MutL (603 aa).

This sequence belongs to the DNA mismatch repair MutL/HexB family.

This protein is involved in the repair of mismatches in DNA. It is required for dam-dependent methyl-directed DNA mismatch repair. May act as a 'molecular matchmaker', a protein that promotes the formation of a stable complex between two or more DNA-binding proteins in an ATP-dependent manner without itself being part of a final effector complex. The polypeptide is DNA mismatch repair protein MutL (Listeria monocytogenes serotype 4a (strain HCC23)).